The primary structure comprises 275 residues: NH(3)-dependent NAD(+) synthetase (275 aa).

ATP is bound at residue 47 to 54 (GISGGQDS). D53 contributes to the Mg(2+) binding site. Residue R141 coordinates deamido-NAD(+). An ATP-binding site is contributed by T161. E166 provides a ligand contact to Mg(2+). Deamido-NAD(+)-binding residues include K174 and D181. 2 residues coordinate ATP: K190 and T212. 261-262 (HK) serves as a coordination point for deamido-NAD(+).

Belongs to the NAD synthetase family. As to quaternary structure, homodimer.

The enzyme catalyses deamido-NAD(+) + NH4(+) + ATP = AMP + diphosphate + NAD(+) + H(+). The protein operates within cofactor biosynthesis; NAD(+) biosynthesis; NAD(+) from deamido-NAD(+) (ammonia route): step 1/1. In terms of biological role, catalyzes the ATP-dependent amidation of deamido-NAD to form NAD. Uses ammonia as a nitrogen source. The chain is NH(3)-dependent NAD(+) synthetase from Lacticaseibacillus paracasei (strain ATCC 334 / BCRC 17002 / CCUG 31169 / CIP 107868 / KCTC 3260 / NRRL B-441) (Lactobacillus paracasei).